Here is a 355-residue protein sequence, read N- to C-terminus: Elongation factor Ts (355 aa).

The involved in Mg(2+) ion dislocation from EF-Tu stretch occupies residues 82 to 85 (TDFV).

This sequence belongs to the EF-Ts family.

It is found in the cytoplasm. Associates with the EF-Tu.GDP complex and induces the exchange of GDP to GTP. It remains bound to the aminoacyl-tRNA.EF-Tu.GTP complex up to the GTP hydrolysis stage on the ribosome. This Helicobacter pylori (strain Shi470) protein is Elongation factor Ts.